The chain runs to 114 residues: Fumarate reductase subunit D (114 aa).

3 helical membrane passes run 27–47, 50–70, and 94–114; these read ICFP…LVPV, IVAF…TIFP, and WVFY…VIAL.

It belongs to the FrdD family. As to quaternary structure, part of an enzyme complex containing four subunits: a flavoprotein (FrdA), an iron-sulfur protein (FrdB), and two hydrophobic anchor proteins (FrdC and FrdD).

It localises to the cell inner membrane. In terms of biological role, anchors the catalytic components of the fumarate reductase complex to the cell membrane, binds quinones. The sequence is that of Fumarate reductase subunit D from Actinobacillus pleuropneumoniae serotype 3 (strain JL03).